The sequence spans 802 residues: Leucine--tRNA ligase (802 aa).

Positions 40–51 (PYPSGAGLHVGH) match the 'HIGH' region motif. Residues 576–580 (KMSKS) carry the 'KMSKS' region motif. ATP is bound at residue Lys579.

The protein belongs to the class-I aminoacyl-tRNA synthetase family.

It localises to the cytoplasm. The enzyme catalyses tRNA(Leu) + L-leucine + ATP = L-leucyl-tRNA(Leu) + AMP + diphosphate. In Bacillus mycoides (strain KBAB4) (Bacillus weihenstephanensis), this protein is Leucine--tRNA ligase.